Reading from the N-terminus, the 443-residue chain is Multidrug resistance protein MdtA (443 aa).

Positions 1 to 24 (MKAQSKRTSRLLILLGIAVAIIVA) are cleaved as a signal peptide. A compositionally biased stretch (polar residues) spans 36–46 (DGSTGAQQHAV). Disordered stretches follow at residues 36 to 57 (DGST…GGRR) and 398 to 443 (TPRS…AEKS). Positions 409 to 419 (AAEKPATAEKA) are enriched in basic and acidic residues. The segment covering 427-443 (SATGASAGSTTTAAEKS) has biased composition (low complexity).

Belongs to the membrane fusion protein (MFP) (TC 8.A.1) family. In terms of assembly, part of a tripartite efflux system composed of MdtA, MdtB and MdtC.

The protein localises to the cell inner membrane. The chain is Multidrug resistance protein MdtA from Yersinia enterocolitica serotype O:8 / biotype 1B (strain NCTC 13174 / 8081).